Consider the following 317-residue polypeptide: Acetyl-coenzyme A carboxylase carboxyl transferase subunit alpha (317 aa).

One can recognise a CoA carboxyltransferase C-terminal domain in the interval 37-292; sequence RLEKKAEKLR…RICLKKHLDD (256 aa).

The protein belongs to the AccA family. Acetyl-CoA carboxylase is a heterohexamer composed of biotin carboxyl carrier protein (AccB), biotin carboxylase (AccC) and two subunits each of ACCase subunit alpha (AccA) and ACCase subunit beta (AccD).

Its subcellular location is the cytoplasm. The catalysed reaction is N(6)-carboxybiotinyl-L-lysyl-[protein] + acetyl-CoA = N(6)-biotinyl-L-lysyl-[protein] + malonyl-CoA. The protein operates within lipid metabolism; malonyl-CoA biosynthesis; malonyl-CoA from acetyl-CoA: step 1/1. Functionally, component of the acetyl coenzyme A carboxylase (ACC) complex. First, biotin carboxylase catalyzes the carboxylation of biotin on its carrier protein (BCCP) and then the CO(2) group is transferred by the carboxyltransferase to acetyl-CoA to form malonyl-CoA. This is Acetyl-coenzyme A carboxylase carboxyl transferase subunit alpha from Syntrophotalea carbinolica (strain DSM 2380 / NBRC 103641 / GraBd1) (Pelobacter carbinolicus).